Reading from the N-terminus, the 650-residue chain is Putative F-box protein R757 (650 aa).

The region spanning 7 to 53 (FSVMESLPTELAYHVLSFIDFNSVVTYRLCSQESNNFIKSMLVFFPI) is the F-box domain.

This Acanthamoeba polyphaga mimivirus (APMV) protein is Putative F-box protein R757.